Consider the following 399-residue polypeptide: uncharacterized protein (399 aa).

The disordered stretch occupies residues 254 to 335; the sequence is SRVSTGDTSP…FFRDSDDDGD (82 aa). Polar residues predominate over residues 255 to 264; it reads RVSTGDTSPY. Residues 310-329 show a composition bias toward basic and acidic residues; it reads RNAEMKKSHSANDSEEFFRD.

This is an uncharacterized protein from Xenopus laevis (African clawed frog).